Here is a 212-residue protein sequence, read N- to C-terminus: Thymidylate kinase (212 aa).

11–18 (GPEGAGKT) is an ATP binding site.

The protein belongs to the thymidylate kinase family.

It carries out the reaction dTMP + ATP = dTDP + ADP. Its function is as follows. Phosphorylation of dTMP to form dTDP in both de novo and salvage pathways of dTTP synthesis. The chain is Thymidylate kinase from Streptococcus pneumoniae (strain CGSP14).